The chain runs to 283 residues: Diaminopimelate epimerase (283 aa).

The substrate site is built by Asn13, Gln45, and Asn65. Cys74 acts as the Proton donor in catalysis. Substrate-binding positions include 75–76 (GN), Asn156, Asn190, and 208–209 (ER). Residue Cys217 is the Proton acceptor of the active site. 218-219 (GS) is a substrate binding site.

The protein belongs to the diaminopimelate epimerase family. In terms of assembly, homodimer.

The protein resides in the cytoplasm. The catalysed reaction is (2S,6S)-2,6-diaminopimelate = meso-2,6-diaminopimelate. It functions in the pathway amino-acid biosynthesis; L-lysine biosynthesis via DAP pathway; DL-2,6-diaminopimelate from LL-2,6-diaminopimelate: step 1/1. Catalyzes the stereoinversion of LL-2,6-diaminopimelate (L,L-DAP) to meso-diaminopimelate (meso-DAP), a precursor of L-lysine and an essential component of the bacterial peptidoglycan. The chain is Diaminopimelate epimerase from Bartonella tribocorum (strain CIP 105476 / IBS 506).